We begin with the raw amino-acid sequence, 552 residues long: Transcription factor lcsF (552 aa).

Disordered regions lie at residues 1-132 (MAPA…DLDP), 169-209 (TSSY…ASLS), 232-258 (EATSTTHKEEGSAAKSPGALQQSHWSS), and 297-349 (ELTS…QHGA). A basic motif region spans residues 31–55 (KDRKEKKRIQNRVAQRSYRSRMKAR). The 46-residue stretch at 31 to 76 (KDRKEKKRIQNRVAQRSYRSRMKARLGELQSRLQAHEEQKAKEEAE) folds into the bZIP domain. Residues 56-63 (LGELQSRL) are leucine-zipper. Residues 64 to 79 (QAHEEQKAKEEAERCD) show a composition bias toward basic and acidic residues. 2 stretches are compositionally biased toward polar residues: residues 98-119 (TPPSGNNAGANDTEPSSINSAS) and 169-186 (TSSYIQPSVPTPPVSLSQ). Residues 298–347 (LTSTGDLPNATWRPSQQFSGPETTPRSHNAENPTQQQSPINDDTPSTTQH) show a composition bias toward polar residues.

It belongs to the bZIP family.

It localises to the nucleus. In terms of biological role, transcription factor that regulates the expression of the gene cluster that mediates the biosynthesis of the lipopeptide antibiotics leucinostatins that show extensive biological activities, including antimalarial, antiviral, antibacterial, antifungal, and antitumor activities, as well as phytotoxic. All 20 genes in the cluster are up-regulated to some extent by lcsF, with the exception of lcsL and lcsP, which are down-regulated. The polypeptide is Transcription factor lcsF (Purpureocillium lilacinum (Paecilomyces lilacinus)).